A 143-amino-acid chain; its full sequence is MADSKELAEQREETRLIIEELLEDGSDPDALYAIEHHISCENFETLEKAAVEVFKLGYEVTEPEEIEIESGEILVCFDAVSESGLNAELIDAQVEQLMNLAEKMGVYYDGWGTYFEDPDAEYDDEDGENEDDESESDKSSRLH.

The span at 117–135 (DPDAEYDDEDGENEDDESE) shows a compositional bias: acidic residues. Residues 117-143 (DPDAEYDDEDGENEDDESESDKSSRLH) form a disordered region.

The protein belongs to the RraB family. As to quaternary structure, interacts with the C-terminal region of Rne.

The protein resides in the cytoplasm. Globally modulates RNA abundance by binding to RNase E (Rne) and regulating its endonucleolytic activity. Can modulate Rne action in a substrate-dependent manner by altering the composition of the degradosome. The protein is Regulator of ribonuclease activity B of Proteus mirabilis (strain HI4320).